Reading from the N-terminus, the 261-residue chain is 6-carboxyhexanoate--CoA ligase (261 aa).

Belongs to the BioW family. As to quaternary structure, homodimer. Mg(2+) serves as cofactor.

It carries out the reaction heptanedioate + ATP + CoA = 6-carboxyhexanoyl-CoA + AMP + diphosphate. Its pathway is metabolic intermediate metabolism; pimeloyl-CoA biosynthesis; pimeloyl-CoA from pimelate: step 1/1. Its function is as follows. Catalyzes the transformation of pimelate into pimeloyl-CoA with concomitant hydrolysis of ATP to AMP. The chain is 6-carboxyhexanoate--CoA ligase from Bacillus licheniformis (strain ATCC 14580 / DSM 13 / JCM 2505 / CCUG 7422 / NBRC 12200 / NCIMB 9375 / NCTC 10341 / NRRL NRS-1264 / Gibson 46).